The chain runs to 231 residues: NKG2-C type II integral membrane protein (231 aa).

Polar residues predominate over residues 1–12; the sequence is MNKQRGTFSEVS. The interval 1–32 is disordered; that stretch reads MNKQRGTFSEVSLAQDPKRQQRKPKGNKSSIS. The Cytoplasmic portion of the chain corresponds to 1 to 70; the sequence is MNKQRGTFSE…CQGLLPPPEK (70 aa). The helical; Signal-anchor for type II membrane protein transmembrane segment at 71-93 threads the bilayer; it reads LTAEVLGIICIVLMATVLKTIVL. Residues 94–231 are Extracellular-facing; the sequence is IPFLEQNNFS…SMIYHCKHKL (138 aa). The N-linked (GlcNAc...) asparagine glycan is linked to Asn100. The region spanning 116-229 is the C-type lectin domain; that stretch reads HCPEEWITYS…GSSMIYHCKH (114 aa). Cystine bridges form between Cys117/Cys128, Cys145/Cys227, and Cys206/Cys219. 2 N-linked (GlcNAc...) asparagine glycosylation sites follow: Asn149 and Asn178.

In terms of assembly, heterodimer with KLRD1; disulfide-linked. KLRD1-KLRC2 receptor complex interacts with TYROBP homodimer; this interaction is necessary for the expression on the cell surface. KLRD1-KLRC2 receptor complex can bind with low affinity to HLA-E loaded with self-peptides derived from the signal sequence of classical MHC class Ia. As to expression, expressed in NK cell subsets, in particular in adaptive CD57-positive NK cells (at protein level). Expressed in terminally differentiated cytotoxic gamma-delta T cells (at protein level). Expressed in alpha-beta T cells subsets (at protein level). KLRD1-KLRC1 and KLRD1-KLRC2 are differentially expressed within NK and T cell populations, with only minor subsets expressing both receptor complexes (at protein level).

The protein localises to the cell membrane. In terms of biological role, immune activating receptor involved in self-nonself discrimination. In complex with KLRD1 on cytotoxic lymphocyte subsets, recognizes non-classical major histocompatibility (MHC) class Ib HLA-E loaded with signal sequence-derived peptides from non-classical MHC class Ib HLA-G molecules, likely playing a role in the generation and effector functions of adaptive natural killer (NK) cells and in maternal-fetal tolerance during pregnancy. Regulates the effector functions of terminally differentiated cytotoxic lymphocyte subsets, and in particular may play a role in adaptive NK cell response to viral infection. Upon HLA-E-peptide binding, transmits intracellular signals via the adapter protein TYROBP/DAP12, triggering the phosphorylation of proximal signaling molecules and cell activation. The protein is NKG2-C type II integral membrane protein (KLRC2) of Homo sapiens (Human).